Consider the following 221-residue polypeptide: uncharacterized protein (221 aa).

Residues M1–R22 form a disordered region. The span at T7–A16 shows a compositional bias: polar residues.

The protein belongs to the IIV-6 259R family.

This is an uncharacterized protein from Invertebrate iridescent virus 3 (IIV-3).